A 134-amino-acid chain; its full sequence is Cytochrome c-type biogenesis protein CcmE (134 aa).

The Cytoplasmic segment spans residues 1–7; the sequence is MKRKYRR. Residues 8–28 traverse the membrane as a helical; Signal-anchor for type II membrane protein segment; that stretch reads LFVVIITLSIFAGSVVFVLGK. Residues 29-134 lie on the Periplasmic side of the membrane; the sequence is LKNNVSFFYT…MPNKYKTNNL (106 aa). The heme site is built by H120 and Y124.

It belongs to the CcmE/CycJ family.

The protein resides in the cell inner membrane. Its function is as follows. Heme chaperone required for the biogenesis of c-type cytochromes. Transiently binds heme delivered by CcmC and transfers the heme to apo-cytochromes in a process facilitated by CcmF and CcmH. The sequence is that of Cytochrome c-type biogenesis protein CcmE from Ehrlichia ruminantium (strain Gardel).